Here is a 340-residue protein sequence, read N- to C-terminus: GTPase Obg (340 aa).

The Obg domain maps to 1-158 (MSFIDEAKIY…KHIILKLKII (158 aa)). In terms of domain architecture, OBG-type G spans 159-325 (SDVGIIGLPN…LSTLIKQIHK (167 aa)). Residues 165 to 172 (GLPNAGKS), 190 to 194 (FTTLE), 211 to 214 (DIPG), 278 to 281 (NKSD), and 306 to 308 (SSI) contribute to the GTP site. The Mg(2+) site is built by serine 172 and threonine 192.

The protein belongs to the TRAFAC class OBG-HflX-like GTPase superfamily. OBG GTPase family. Monomer. Requires Mg(2+) as cofactor.

It localises to the cytoplasm. An essential GTPase which binds GTP, GDP and possibly (p)ppGpp with moderate affinity, with high nucleotide exchange rates and a fairly low GTP hydrolysis rate. Plays a role in control of the cell cycle, stress response, ribosome biogenesis and in those bacteria that undergo differentiation, in morphogenesis control. This Ehrlichia canis (strain Jake) protein is GTPase Obg.